Consider the following 123-residue polypeptide: CD59A glycoprotein (123 aa).

Positions 1–23 are cleaved as a signal peptide; sequence MRAQRGLILLLLLLAVFCSTAVS. The 73-residue stretch at 24–96 folds into the UPAR/Ly6 domain; the sequence is LTCYHCFQPV…CCQFNLCNKS (73 aa). 5 disulfide bridges follow: Cys-26–Cys-50, Cys-29–Cys-37, Cys-43–Cys-63, Cys-69–Cys-87, and Cys-88–Cys-93. Asn-40 carries N-linked (GlcNAc...) asparagine glycosylation. N-linked (GlcNAc...) asparagine glycosylation is present at Asn-94. A propeptide spans 97–123 (removed in mature form); that stretch reads DGSLGKTPLLGTSVLVAILNLCFLSHL.

As to quaternary structure, interacts with T-cell surface antigen CD2. In terms of processing, N- and O-glycosylated. Expressed in all tissues examined (liver, kidney, spleen, thymus, brain and heart). Low levels in thymus. Also expressed in mononuclear cells, erythrocytes and platelets. Barely detected in neutrophils.

It localises to the cell membrane. The protein resides in the secreted. Functionally, potent inhibitor of the complement membrane attack complex (MAC) action, which protects self-cells from damage during complement activation. Acts by binding to the beta-haipins of C8 (C8A and C8B) components of the assembling MAC, forming an intermolecular beta-sheet that prevents incorporation of the multiple copies of C9 required for complete formation of the osmolytic pore. The protein is CD59A glycoprotein of Mus musculus (Mouse).